The primary structure comprises 174 residues: Translation initiation factor IF-3 (174 aa).

The protein belongs to the IF-3 family. Monomer.

The protein resides in the cytoplasm. Its function is as follows. IF-3 binds to the 30S ribosomal subunit and shifts the equilibrium between 70S ribosomes and their 50S and 30S subunits in favor of the free subunits, thus enhancing the availability of 30S subunits on which protein synthesis initiation begins. This Helicobacter hepaticus (strain ATCC 51449 / 3B1) protein is Translation initiation factor IF-3.